We begin with the raw amino-acid sequence, 88 residues long: Thioredoxin-2 (88 aa).

In terms of domain architecture, Thioredoxin spans 2-88 (SRVIHISSNE…YRNGAKVSEF (87 aa)). Catalysis depends on nucleophile residues Cys31 and Cys34. A disulfide bridge connects residues Cys31 and Cys34.

The protein belongs to the thioredoxin family.

Functionally, participates in various redox reactions through the reversible oxidation of its active center dithiol to a disulfide and catalyzes dithiol-disulfide exchange reactions. The protein is Thioredoxin-2 (trxB) of Dictyostelium discoideum (Social amoeba).